The chain runs to 158 residues: Transcription elongation factor GreA (158 aa).

This sequence belongs to the GreA/GreB family.

Its function is as follows. Necessary for efficient RNA polymerase transcription elongation past template-encoded arresting sites. The arresting sites in DNA have the property of trapping a certain fraction of elongating RNA polymerases that pass through, resulting in locked ternary complexes. Cleavage of the nascent transcript by cleavage factors such as GreA or GreB allows the resumption of elongation from the new 3'terminus. GreA releases sequences of 2 to 3 nucleotides. This is Transcription elongation factor GreA from Zymomonas mobilis subsp. mobilis (strain ATCC 31821 / ZM4 / CP4).